A 249-amino-acid polypeptide reads, in one-letter code: tRNA (guanine-N(1)-)-methyltransferase (249 aa).

Residues Gly-112 and 132-137 (LGDFVL) contribute to the S-adenosyl-L-methionine site.

The protein belongs to the RNA methyltransferase TrmD family. As to quaternary structure, homodimer.

It is found in the cytoplasm. The catalysed reaction is guanosine(37) in tRNA + S-adenosyl-L-methionine = N(1)-methylguanosine(37) in tRNA + S-adenosyl-L-homocysteine + H(+). In terms of biological role, specifically methylates guanosine-37 in various tRNAs. The chain is tRNA (guanine-N(1)-)-methyltransferase from Geobacter sp. (strain M21).